Here is a 162-residue protein sequence, read N- to C-terminus: Cyclic pyranopterin monophosphate synthase (162 aa).

Substrate is bound by residues 75 to 77 (LCH) and 113 to 114 (ME). The active site involves Asp128.

This sequence belongs to the MoaC family. In terms of assembly, homohexamer; trimer of dimers.

It carries out the reaction (8S)-3',8-cyclo-7,8-dihydroguanosine 5'-triphosphate = cyclic pyranopterin phosphate + diphosphate. The protein operates within cofactor biosynthesis; molybdopterin biosynthesis. Catalyzes the conversion of (8S)-3',8-cyclo-7,8-dihydroguanosine 5'-triphosphate to cyclic pyranopterin monophosphate (cPMP). The sequence is that of Cyclic pyranopterin monophosphate synthase from Xanthobacter autotrophicus (strain ATCC BAA-1158 / Py2).